Reading from the N-terminus, the 460-residue chain is Probable carboxypeptidase TRV_02791 (460 aa).

The N-terminal stretch at 1–22 (MQKTYLWALVSLLASSLVDARS) is a signal peptide. Asn98 carries N-linked (GlcNAc...) asparagine glycosylation. Residue Asp175 coordinates Zn(2+). Glu207 (proton acceptor) is an active-site residue. Position 208 (Glu208) interacts with Zn(2+). A glycan (N-linked (GlcNAc...) asparagine) is linked at Asn395.

This sequence belongs to the peptidase M20A family. Zn(2+) is required as a cofactor.

The protein localises to the secreted. This chain is Probable carboxypeptidase TRV_02791, found in Trichophyton verrucosum (strain HKI 0517).